The sequence spans 116 residues: Large ribosomal subunit protein bL19 (116 aa).

Belongs to the bacterial ribosomal protein bL19 family.

This protein is located at the 30S-50S ribosomal subunit interface and may play a role in the structure and function of the aminoacyl-tRNA binding site. The protein is Large ribosomal subunit protein bL19 of Syntrophomonas wolfei subsp. wolfei (strain DSM 2245B / Goettingen).